Consider the following 563-residue polypeptide: Sulfite reductase [NADPH] hemoprotein beta-component (563 aa).

Positions 426, 432, 472, and 476 each coordinate [4Fe-4S] cluster. Cysteine 476 contacts siroheme.

Belongs to the nitrite and sulfite reductase 4Fe-4S domain family. In terms of assembly, alpha(8)-beta(8). The alpha component is a flavoprotein, the beta component is a hemoprotein. Siroheme serves as cofactor. [4Fe-4S] cluster is required as a cofactor.

The catalysed reaction is hydrogen sulfide + 3 NADP(+) + 3 H2O = sulfite + 3 NADPH + 4 H(+). Its pathway is sulfur metabolism; hydrogen sulfide biosynthesis; hydrogen sulfide from sulfite (NADPH route): step 1/1. Functionally, component of the sulfite reductase complex that catalyzes the 6-electron reduction of sulfite to sulfide. This is one of several activities required for the biosynthesis of L-cysteine from sulfate. This is Sulfite reductase [NADPH] hemoprotein beta-component from Photobacterium profundum (strain SS9).